The primary structure comprises 423 residues: Mannose-6-phosphate isomerase (423 aa).

At Ala2 the chain carries N-acetylalanine. Phosphoserine is present on residues Ser102 and Ser108. Residues Gln110, His112, Glu137, and His276 each contribute to the Zn(2+) site. Residue Arg295 is part of the active site.

Belongs to the mannose-6-phosphate isomerase type 1 family. Zn(2+) is required as a cofactor.

The protein resides in the cytoplasm. It catalyses the reaction D-mannose 6-phosphate = D-fructose 6-phosphate. It participates in nucleotide-sugar biosynthesis; GDP-alpha-D-mannose biosynthesis; alpha-D-mannose 1-phosphate from D-fructose 6-phosphate: step 1/2. Isomerase that catalyzes the interconversion of fructose-6-P and mannose-6-P and has a critical role in the supply of D-mannose derivatives required for many eukaryotic glycosylation reactions. The protein is Mannose-6-phosphate isomerase (MPI) of Bos taurus (Bovine).